A 74-amino-acid polypeptide reads, in one-letter code: Putative membrane protein insertion efficiency factor (74 aa).

Belongs to the UPF0161 family.

It localises to the cell inner membrane. Its function is as follows. Could be involved in insertion of integral membrane proteins into the membrane. In Endomicrobium trichonymphae, this protein is Putative membrane protein insertion efficiency factor.